A 135-amino-acid chain; its full sequence is Peptidyl-prolyl cis-trans isomerase FPR2 (135 aa).

Residues 1–17 (MMFNIYLFVTFFSTILA) form the signal peptide. Positions 43–132 (GDKVKVHYTG…VFDVELVDVK (90 aa)) constitute a PPIase FKBP-type domain.

It belongs to the FKBP-type PPIase family. FKBP2 subfamily.

It localises to the endoplasmic reticulum membrane. The enzyme catalyses [protein]-peptidylproline (omega=180) = [protein]-peptidylproline (omega=0). Inhibited by both FK506 and rapamycin. Binds FK506 with 15-fold lower affinity than FKB1. In terms of biological role, PPIases accelerate the folding of proteins. It catalyzes the cis-trans isomerization of proline imidic peptide bonds in oligopeptides. FKBP-13 may play a role in protein trafficking in the ER. The protein is Peptidyl-prolyl cis-trans isomerase FPR2 (FPR2) of Saccharomyces cerevisiae (strain ATCC 204508 / S288c) (Baker's yeast).